The following is a 382-amino-acid chain: Pentatricopeptide repeat-containing protein 2, mitochondrial (382 aa).

The stretch at 159–193 (TSFNILMDMLFTKGQYERAVEVLVEMRNQRVRFSK) is one PPR repeat.

The protein belongs to the PTCD2 family.

The protein resides in the mitochondrion. May be involved in mitochondrial RNA maturation and mitochondrial respiratory chain function. This is Pentatricopeptide repeat-containing protein 2, mitochondrial (ptcd2) from Xenopus laevis (African clawed frog).